Consider the following 491-residue polypeptide: uncharacterized protein (491 aa).

266-273 (GIQGTGKS) provides a ligand contact to ATP.

It belongs to the AAA ATPase family. Highly divergent.

It is found in the plastid. The protein localises to the chloroplast. This is an uncharacterized protein from Porphyra purpurea (Red seaweed).